The following is a 234-amino-acid chain: Lipoprotein-releasing system ATP-binding protein LolD (234 aa).

The 221-residue stretch at 13–233 (IYLHEIKRQY…SLSDGQVVEL (221 aa)) folds into the ABC transporter domain. 49 to 56 (APSGSGKS) serves as a coordination point for ATP.

This sequence belongs to the ABC transporter superfamily. Lipoprotein translocase (TC 3.A.1.125) family. The complex is composed of two ATP-binding proteins (LolD) and two transmembrane proteins (LolC and LolE).

It is found in the cell inner membrane. Its function is as follows. Part of the ABC transporter complex LolCDE involved in the translocation of mature outer membrane-directed lipoproteins, from the inner membrane to the periplasmic chaperone, LolA. Responsible for the formation of the LolA-lipoprotein complex in an ATP-dependent manner. This is Lipoprotein-releasing system ATP-binding protein LolD from Bradyrhizobium diazoefficiens (strain JCM 10833 / BCRC 13528 / IAM 13628 / NBRC 14792 / USDA 110).